A 1094-amino-acid chain; its full sequence is Isoleucine--tRNA ligase (1094 aa).

Positions Pro53–His63 match the 'HIGH' region motif. The 'KMSKS' region motif lies at Lys624–Arg628. Lys627 is an ATP binding site.

This sequence belongs to the class-I aminoacyl-tRNA synthetase family. IleS type 2 subfamily. Monomer. It depends on Zn(2+) as a cofactor.

It localises to the cytoplasm. It carries out the reaction tRNA(Ile) + L-isoleucine + ATP = L-isoleucyl-tRNA(Ile) + AMP + diphosphate. Functionally, catalyzes the attachment of isoleucine to tRNA(Ile). As IleRS can inadvertently accommodate and process structurally similar amino acids such as valine, to avoid such errors it has two additional distinct tRNA(Ile)-dependent editing activities. One activity is designated as 'pretransfer' editing and involves the hydrolysis of activated Val-AMP. The other activity is designated 'posttransfer' editing and involves deacylation of mischarged Val-tRNA(Ile). This is Isoleucine--tRNA ligase from Rickettsia felis (strain ATCC VR-1525 / URRWXCal2) (Rickettsia azadi).